The sequence spans 379 residues: MNVFWFLPTHGDGHYLGTTKGARPVTLNYLKQVAQAADDLGYYGVLIPTGRSCEDSWVIASALVPLTERLRYLVAIRPGIISPTVSARMAATLDRLSGGRLLINVVTGGDPDENRGDGSFLDHSERYEVTDEFLKIWRRVLQGEAVDFEGKHLRVQNAKALYPPIQQPYPPLYFGGSSDAAHDLAADQVDVYLTWGEPPAAVAQKLADVRERAARKGRTVKFGIRLHVIVRETSEEAWKAASTLIEHISDDTIAAAQKSFSRFDSEGQRRMAALHDGRRDNLEIAPNLWAGVGLVRGGAGTALVGNPEEVAARIKEYADLGIESFIFSGYPHLEEAYRFAELVFPLLPEPYASLAGRGITNLTGPFGEMIANDLPPQAK.

The protein belongs to the SsuD family.

It carries out the reaction an alkanesulfonate + FMNH2 + O2 = an aldehyde + FMN + sulfite + H2O + 2 H(+). In terms of biological role, catalyzes the desulfonation of aliphatic sulfonates. In Pseudomonas syringae pv. syringae (strain B728a), this protein is Alkanesulfonate monooxygenase.